The primary structure comprises 212 residues: Redox-sensing transcriptional repressor Rex (212 aa).

The H-T-H motif DNA-binding region spans Leu18 to Phe57. Gly92 to Gly97 contacts NAD(+).

This sequence belongs to the transcriptional regulatory Rex family. In terms of assembly, homodimer.

It is found in the cytoplasm. Functionally, modulates transcription in response to changes in cellular NADH/NAD(+) redox state. The polypeptide is Redox-sensing transcriptional repressor Rex (Staphylococcus haemolyticus (strain JCSC1435)).